The following is a 404-amino-acid chain: Argininosuccinate synthase (404 aa).

ATP-binding positions include 10–18 (AYSGGVDTS) and alanine 38. Residue tyrosine 89 coordinates L-citrulline. Glycine 119 is an ATP binding site. Residues threonine 121, asparagine 125, and aspartate 126 each contribute to the L-aspartate site. An L-citrulline-binding site is contributed by asparagine 125. L-citrulline-binding residues include arginine 129, serine 177, serine 186, glutamate 262, and tyrosine 274.

Belongs to the argininosuccinate synthase family. Type 1 subfamily. In terms of assembly, homotetramer.

Its subcellular location is the cytoplasm. It carries out the reaction L-citrulline + L-aspartate + ATP = 2-(N(omega)-L-arginino)succinate + AMP + diphosphate + H(+). It participates in amino-acid biosynthesis; L-arginine biosynthesis; L-arginine from L-ornithine and carbamoyl phosphate: step 2/3. In Prochlorococcus marinus subsp. pastoris (strain CCMP1986 / NIES-2087 / MED4), this protein is Argininosuccinate synthase.